Here is a 288-residue protein sequence, read N- to C-terminus: Nucleotide-binding protein Neut_1559 (288 aa).

8–15 (GLSGSGKS) is an ATP binding site. GTP is bound at residue 57 to 60 (DMRS).

It belongs to the RapZ-like family.

In terms of biological role, displays ATPase and GTPase activities. This is Nucleotide-binding protein Neut_1559 from Nitrosomonas eutropha (strain DSM 101675 / C91 / Nm57).